The chain runs to 153 residues: H/ACA ribonucleoprotein complex subunit 2 (153 aa).

A Glycyl lysine isopeptide (Lys-Gly) (interchain with G-Cter in SUMO2) cross-link involves residue lysine 3. Lysine 5 participates in a covalent cross-link: Glycyl lysine isopeptide (Lys-Gly) (interchain with G-Cter in SUMO); alternate. Lysine 5 participates in a covalent cross-link: Glycyl lysine isopeptide (Lys-Gly) (interchain with G-Cter in SUMO1); alternate. Lysine 5 participates in a covalent cross-link: Glycyl lysine isopeptide (Lys-Gly) (interchain with G-Cter in SUMO2); alternate. Position 19 is a phosphoserine (serine 19).

The protein belongs to the eukaryotic ribosomal protein eL8 family. Part of the H/ACA small nucleolar ribonucleoprotein (H/ACA snoRNP) complex, which contains NHP2/NOLA2, GAR1/NOLA1, NOP10/NOLA3, and DKC1/NOLA4, which is presumed to be the catalytic subunit. The complex contains a stable core formed by binding of one or two NOP10-DKC1 heterodimers to NHP2; GAR1 subsequently binds to this core via DKC1. The complex binds a box H/ACA small nucleolar RNA (snoRNA), which may target the specific site of modification within the RNA substrate. During assembly, the complex contains NAF1 instead of GAR1/NOLA1. The complex also interacts with TERC, which contains a 3'-terminal domain related to the box H/ACA snoRNAs. Specific interactions with snoRNAs or TERC are mediated by GAR1 and NHP2. Associates with NOLC1/NOPP140. H/ACA snoRNPs interact with the SMN complex, consisting of SMN1 or SMN2, GEMIN2/SIP1, DDX20/GEMIN3, and GEMIN4. This is mediated by interaction between GAR1 and SMN1 or SMN2. The SMN complex may be required for correct assembly of the H/ACA snoRNP complex. Component of the telomerase holoenzyme complex composed of one molecule of TERT, one molecule of WRAP53/TCAB1, two molecules of H/ACA ribonucleoprotein complex subunits DKC1, NOP10, NHP2 and GAR1, and a telomerase RNA template component (TERC). The telomerase holoenzyme complex is associated with TEP1, SMG6/EST1A and POT1.

The protein resides in the nucleus. Its subcellular location is the nucleolus. It localises to the cajal body. In terms of biological role, required for ribosome biogenesis and telomere maintenance. Part of the H/ACA small nucleolar ribonucleoprotein (H/ACA snoRNP) complex, which catalyzes pseudouridylation of rRNA. This involves the isomerization of uridine such that the ribose is subsequently attached to C5, instead of the normal N1. Each rRNA can contain up to 100 pseudouridine ('psi') residues, which may serve to stabilize the conformation of rRNAs. May also be required for correct processing or intranuclear trafficking of TERC, the RNA component of the telomerase reverse transcriptase (TERT) holoenzyme. The sequence is that of H/ACA ribonucleoprotein complex subunit 2 (Nhp2) from Mus musculus (Mouse).